The following is a 216-amino-acid chain: Dual specificity protein phosphatase VP2 (216 aa).

The segment at 1-50 is disordered; sequence MHGNGGQPAAGGSESALSREGQPGPSGAAQGQVISNERSPRRYSTRTING. Positions 21-32 are enriched in low complexity; that stretch reads GQPGPSGAAQGQ. The Phosphocysteine intermediate role is filled by cysteine 95. The tract at residues 165-187 is disordered; the sequence is DREADFTPSEEDGGTTSSDFDED. Over residues 172–187 the composition is skewed to acidic residues; sequence PSEEDGGTTSSDFDED.

Belongs to the gyrovirus protein VP2 family.

The enzyme catalyses O-phospho-L-tyrosyl-[protein] + H2O = L-tyrosyl-[protein] + phosphate. It catalyses the reaction O-phospho-L-seryl-[protein] + H2O = L-seryl-[protein] + phosphate. It carries out the reaction O-phospho-L-threonyl-[protein] + H2O = L-threonyl-[protein] + phosphate. May act as a scaffold protein in virion assembly. May also play a role in intracellular signaling during viral replication. The protein is Dual specificity protein phosphatase VP2 (VP2) of Gallus gallus (Chicken).